We begin with the raw amino-acid sequence, 343 residues long: 3-oxopimeloyl-[acyl-carrier-protein] synthase (343 aa).

Active-site residues include Cys132 and His272. An ACP-binding region spans residues 273-277 (QANHR). The active site involves Asn302.

It belongs to the thiolase-like superfamily. BioZ family.

The catalysed reaction is malonyl-[ACP] + an acyl-CoA + H(+) = a 3-oxoacyl-[ACP] + CO2 + CoA. The enzyme catalyses glutaryl-CoA + malonyl-[ACP] + H(+) = 3-oxo-6-carboxyhexanoyl-[ACP] + CO2 + CoA. It functions in the pathway cofactor biosynthesis; biotin biosynthesis. In terms of biological role, involved in the formation of the biotin precursor pimeloyl-ACP. Catalyzes the condensation of glutaryl-CoA, an intermediate in lysine degradation, with malonyl-ACP to produce 3-oxopimeloyl-ACP. The chain is 3-oxopimeloyl-[acyl-carrier-protein] synthase from Rhodothermus marinus (strain ATCC 43812 / DSM 4252 / R-10) (Rhodothermus obamensis).